The following is a 63-amino-acid chain: Large ribosomal subunit protein uL30 (63 aa).

This sequence belongs to the universal ribosomal protein uL30 family. In terms of assembly, part of the 50S ribosomal subunit.

The sequence is that of Large ribosomal subunit protein uL30 from Xylella fastidiosa (strain 9a5c).